A 256-amino-acid chain; its full sequence is MLSRVVLSAAATAAPCLKNAAVLGPGVLQATRVFHTGQPRLAPLPPLPEYGGKVRLGLIPEEFFQFLYPKTGVTGPYVLGTGLSLYFLSKEIYVITPETFSTISVVGLIVYVIKKYGASIGEFIDKLNEEKIAQLEEIKQSSMKQIQDAINREKAQQALVQKRHYLFDVQRNNIALALEVTYRERLHKAYKEVKNRLDYHISVQDMMRRKEGEHMINWVEKHVIQSISAQQEKETIAKCIGDLKMLAKKAQAQPIM.

Residues 1-42 (MLSRVVLSAAATAAPCLKNAAVLGPGVLQATRVFHTGQPRLA) constitute a mitochondrion transit peptide. The residue at position 131 (lysine 131) is an N6-succinyllysine. 6 positions are modified to N6-acetyllysine: lysine 139, lysine 154, lysine 162, lysine 221, lysine 233, and lysine 244.

The protein belongs to the eukaryotic ATPase B chain family. Component of the ATP synthase complex composed at least of ATP5F1A/subunit alpha, ATP5F1B/subunit beta, ATP5MC1/subunit c (homooctomer), MT-ATP6/subunit a, MT-ATP8/subunit 8, ATP5ME/subunit e, ATP5MF/subunit f, ATP5MG/subunit g, ATP5MK/subunit k, ATP5MJ/subunit j, ATP5F1C/subunit gamma, ATP5F1D/subunit delta, ATP5F1E/subunit epsilon, ATP5PF/subunit F6, ATP5PB/subunit b, ATP5PD/subunit d, ATP5PO/subunit OSCP. ATP synthase complex consists of a soluble F(1) head domain (subunits alpha(3) and beta(3)) - the catalytic core - and a membrane F(0) domain - the membrane proton channel (subunits c, a, 8, e, f, g, k and j). These two domains are linked by a central stalk (subunits gamma, delta, and epsilon) rotating inside the F1 region and a stationary peripheral stalk (subunits F6, b, d, and OSCP).

The protein localises to the mitochondrion. It localises to the mitochondrion inner membrane. In terms of biological role, subunit b, of the mitochondrial membrane ATP synthase complex (F(1)F(0) ATP synthase or Complex V) that produces ATP from ADP in the presence of a proton gradient across the membrane which is generated by electron transport complexes of the respiratory chain. ATP synthase complex consist of a soluble F(1) head domain - the catalytic core - and a membrane F(1) domain - the membrane proton channel. These two domains are linked by a central stalk rotating inside the F(1) region and a stationary peripheral stalk. During catalysis, ATP synthesis in the catalytic domain of F(1) is coupled via a rotary mechanism of the central stalk subunits to proton translocation. In vivo, can only synthesize ATP although its ATP hydrolase activity can be activated artificially in vitro. Part of the complex F(0) domain. Part of the complex F(0) domain and the peripheric stalk, which acts as a stator to hold the catalytic alpha(3)beta(3) subcomplex and subunit a/ATP6 static relative to the rotary elements. This is ATP synthase peripheral stalk subunit b, mitochondrial from Rattus norvegicus (Rat).